The chain runs to 191 residues: Peptide methionine sulfoxide reductase (191 aa).

Disordered regions lie at residues 1–20 and 168–191; these read MASSTTNNPALDLDSDTPEN and EKGGGNGNKQSAQKGCNDPIKCYG.

The protein belongs to the MsrA Met sulfoxide reductase family.

It catalyses the reaction L-methionyl-[protein] + [thioredoxin]-disulfide + H2O = L-methionyl-(S)-S-oxide-[protein] + [thioredoxin]-dithiol. It carries out the reaction [thioredoxin]-disulfide + L-methionine + H2O = L-methionine (S)-S-oxide + [thioredoxin]-dithiol. Functionally, has an important function as a repair enzyme for proteins that have been inactivated by oxidation. Catalyzes the reversible oxidation-reduction of methionine sulfoxide in proteins to methionine. This is Peptide methionine sulfoxide reductase from Fragaria ananassa (Strawberry).